A 227-amino-acid polypeptide reads, in one-letter code: ATP-dependent dethiobiotin synthetase BioD (227 aa).

13–18 contacts ATP; that stretch reads DIGKTY. Threonine 17 is a Mg(2+) binding site. The active site involves lysine 38. A substrate-binding site is contributed by serine 42. ATP contacts are provided by residues aspartate 55, 116–119, and 179–180; these read EGSG and NN. Residues aspartate 55 and glutamate 116 each contribute to the Mg(2+) site.

The protein belongs to the dethiobiotin synthetase family. As to quaternary structure, homodimer. It depends on Mg(2+) as a cofactor.

It localises to the cytoplasm. It catalyses the reaction (7R,8S)-7,8-diammoniononanoate + CO2 + ATP = (4R,5S)-dethiobiotin + ADP + phosphate + 3 H(+). It functions in the pathway cofactor biosynthesis; biotin biosynthesis; biotin from 7,8-diaminononanoate: step 1/2. Functionally, catalyzes a mechanistically unusual reaction, the ATP-dependent insertion of CO2 between the N7 and N8 nitrogen atoms of 7,8-diaminopelargonic acid (DAPA, also called 7,8-diammoniononanoate) to form a ureido ring. This is ATP-dependent dethiobiotin synthetase BioD from Clostridium botulinum (strain Alaska E43 / Type E3).